We begin with the raw amino-acid sequence, 316 residues long: ATP synthase gamma chain (316 aa).

It belongs to the ATPase gamma chain family. In terms of assembly, F-type ATPases have 2 components, CF(1) - the catalytic core - and CF(0) - the membrane proton channel. CF(1) has five subunits: alpha(3), beta(3), gamma(1), delta(1), epsilon(1). CF(0) has three main subunits: a, b and c.

It localises to the cellular thylakoid membrane. Functionally, produces ATP from ADP in the presence of a proton gradient across the membrane. The gamma chain is believed to be important in regulating ATPase activity and the flow of protons through the CF(0) complex. In Prochlorococcus marinus (strain MIT 9215), this protein is ATP synthase gamma chain.